We begin with the raw amino-acid sequence, 434 residues long: MSSAPAAGTASTSRFFKSHVSETDPDIFSAIQKEFGRQQHEIELIASENIVSQAVLDAAGSVLTNKYAEGYPGKRYYGGCQYVDIVEDIAIDRAKKLFNCEFANVQPNSGSQANQGVFNALAQPGDTILGLSLAAGGHLTHGAPVNQSGKWFKAVHYMVKPDSHLIDMDEVRKLAQEHKPRIIIAGGSAYPRKIDFAAFRAIADEVGAIFLVDMAHFAGLVAAGLIPSPFPHAHVVTTTTHKTLRGPRGGMILTNDADIAKKINSAIFPGIQGGPLMHVIAGKAVAFGEALRPDFKVYIKQVMDNARALGEVLVQNGFALVSGGTDTHLVLVDLRPKKLTGTKAEKALGRANITCNKNGIPFDPEKPMVTSGIRLGSPAGTTRGFGVAEFQEIGRLISEVLDGVAKNGEDGNGAVEAAVKAKAIALCDRFPIYA.

(6S)-5,6,7,8-tetrahydrofolate is bound by residues Leu-133 and 137–139 (GHL). At Lys-242 the chain carries N6-(pyridoxal phosphate)lysine.

The protein belongs to the SHMT family. Homodimer. Pyridoxal 5'-phosphate serves as cofactor.

It localises to the cytoplasm. It catalyses the reaction (6R)-5,10-methylene-5,6,7,8-tetrahydrofolate + glycine + H2O = (6S)-5,6,7,8-tetrahydrofolate + L-serine. It functions in the pathway one-carbon metabolism; tetrahydrofolate interconversion. Its pathway is amino-acid biosynthesis; glycine biosynthesis; glycine from L-serine: step 1/1. Its function is as follows. Catalyzes the reversible interconversion of serine and glycine with tetrahydrofolate (THF) serving as the one-carbon carrier. This reaction serves as the major source of one-carbon groups required for the biosynthesis of purines, thymidylate, methionine, and other important biomolecules. Also exhibits THF-independent aldolase activity toward beta-hydroxyamino acids, producing glycine and aldehydes, via a retro-aldol mechanism. This chain is Serine hydroxymethyltransferase, found in Hyphomicrobium methylovorum.